The following is a 151-amino-acid chain: MTENAQPMFSIEKIYIKDLSLEVPNAPKIFLERDTPQISVQLRTEGNTVDEGLYEVTLTVTVSATLGEDRSVFLVEVAQAGVFQIRNVPPAELEPVMMIGCPNILFPYAREAVSAAVSRAGFQPIVLAPVNFEALYQQQQAAKEGGDVAIQ.

It belongs to the SecB family. In terms of assembly, homotetramer, a dimer of dimers. One homotetramer interacts with 1 SecA dimer.

Its subcellular location is the cytoplasm. In terms of biological role, one of the proteins required for the normal export of preproteins out of the cell cytoplasm. It is a molecular chaperone that binds to a subset of precursor proteins, maintaining them in a translocation-competent state. It also specifically binds to its receptor SecA. This is Protein-export protein SecB from Azoarcus sp. (strain BH72).